The following is a 218-amino-acid chain: Glutathione S-transferase A (218 aa).

Serine 1 is modified (N-acetylserine). Residues glycine 2–glycine 82 form the GST N-terminal domain. Residue lysine 3 is modified to N6-succinyllysine. Glutathione contacts are provided by residues tyrosine 8, lysine 44, glutamine 53 to valine 54, and glutamine 66 to serine 67. Positions aspartate 84–phenylalanine 206 constitute a GST C-terminal domain.

The protein belongs to the GST superfamily. Alpha family. Homodimer or heterodimer of GSTA1 and GSTA2.

Its subcellular location is the cytoplasm. The catalysed reaction is RX + glutathione = an S-substituted glutathione + a halide anion + H(+). It catalyses the reaction prostaglandin A2 + glutathione = prostaglandin A2-S-(R)-glutathione. The enzyme catalyses prostaglandin J2 + glutathione = prostaglandin J2-S-(R)-glutathione. It carries out the reaction (13S)-hydroperoxy-(9Z,11E)-octadecadienoate + 2 glutathione = (13S)-hydroxy-(9Z,11E)-octadecadienoate + glutathione disulfide + H2O. The catalysed reaction is androst-5-ene-3,17-dione = androst-4-ene-3,17-dione. Glutathione S-transferase that catalyzes the nucleophilic attack of the sulfur atom of glutathione on the electrophilic groups of a wide range of exogenous and endogenous compounds. Involved in the formation of glutathione conjugates of both prostaglandin A2 (PGA2) and prostaglandin J2 (PGJ2). It also catalyzes the isomerization of D5-androstene-3,17-dione (AD) into D4-androstene-3,17-dione and may therefore play an important role in hormone biosynthesis. Through its glutathione-dependent peroxidase activity toward the fatty acid hydroperoxide (13S)-hydroperoxy-(9Z,11E)-octadecadienoate/13-HPODE it is also involved in the metabolism of oxidized linoleic acid. The polypeptide is Glutathione S-transferase A (Cavia porcellus (Guinea pig)).